A 77-amino-acid polypeptide reads, in one-letter code: U8-lycotoxin-Ls1j (77 aa).

The N-terminal stretch at 1 to 20 is a signal peptide; it reads MKLIIFTGLILFAIVSLIEA. Residues 21-26 constitute a propeptide that is removed on maturation; it reads QANNEK.

It belongs to the neurotoxin 19 (CSTX) family. 08 (U8-Lctx) subfamily. In terms of processing, contains 4 disulfide bonds. Expressed by the venom gland.

The protein localises to the secreted. This is U8-lycotoxin-Ls1j from Lycosa singoriensis (Wolf spider).